The following is an 85-amino-acid chain: Probable Thioredoxin (85 aa).

The 84-residue stretch at 2-85 (VVNIEVFTSP…LFEAINDEME (84 aa)) folds into the Glutaredoxin domain. Cys13 and Cys16 are oxidised to a cystine.

The protein belongs to the glutaredoxin family.

The protein localises to the cytoplasm. Functionally, acts to maintain redox homeostasis; functions as a protein disulfide reductase. In Methanothermobacter thermautotrophicus (strain ATCC 29096 / DSM 1053 / JCM 10044 / NBRC 100330 / Delta H) (Methanobacterium thermoautotrophicum), this protein is Probable Thioredoxin.